The chain runs to 213 residues: uncharacterized protein (213 aa).

Positions 53, 74, and 97 each coordinate S-adenosyl-L-methionine.

This sequence belongs to the methyltransferase superfamily. YrrT family.

Functionally, could be a S-adenosyl-L-methionine-dependent methyltransferase. This is an uncharacterized protein from Bacillus velezensis (strain DSM 23117 / BGSC 10A6 / LMG 26770 / FZB42) (Bacillus amyloliquefaciens subsp. plantarum).